Here is a 410-residue protein sequence, read N- to C-terminus: Methylamine dehydrogenase heavy chain (410 aa).

The signal sequence occupies residues 1–35; the sequence is MTHAYTKVRQALCYGSATLGAAALAALIAAGSAAA.

This sequence belongs to the aromatic amine dehydrogenase heavy chain family. As to quaternary structure, tetramer of two light and two heavy chains.

The protein localises to the periplasm. It catalyses the reaction 2 oxidized [amicyanin] + methylamine + H2O = 2 reduced [amicyanin] + formaldehyde + NH4(+) + 2 H(+). Functionally, methylamine dehydrogenase carries out the oxidation of methylamine. Electrons are passed from methylamine dehydrogenase to amicyanin. The chain is Methylamine dehydrogenase heavy chain (mauB) from Methylorubrum extorquens (strain ATCC 14718 / DSM 1338 / JCM 2805 / NCIMB 9133 / AM1) (Methylobacterium extorquens).